Consider the following 175-residue polypeptide: CDP-archaeol synthase (175 aa).

4 helical membrane passes run 41-61, 78-98, 122-142, and 150-170; these read GLFS…WLSM, YASA…GDMF, FVVG…VSNF, and VLIM…FIGV.

It belongs to the CDP-archaeol synthase family. Mg(2+) serves as cofactor.

It localises to the cell membrane. The catalysed reaction is 2,3-bis-O-(geranylgeranyl)-sn-glycerol 1-phosphate + CTP + H(+) = CDP-2,3-bis-O-(geranylgeranyl)-sn-glycerol + diphosphate. The protein operates within membrane lipid metabolism; glycerophospholipid metabolism. Functionally, catalyzes the formation of CDP-2,3-bis-(O-geranylgeranyl)-sn-glycerol (CDP-archaeol) from 2,3-bis-(O-geranylgeranyl)-sn-glycerol 1-phosphate (DGGGP) and CTP. This reaction is the third ether-bond-formation step in the biosynthesis of archaeal membrane lipids. This Methanosarcina acetivorans (strain ATCC 35395 / DSM 2834 / JCM 12185 / C2A) protein is CDP-archaeol synthase.